A 204-amino-acid chain; its full sequence is ADP-ribosylation factor-like protein 15 (204 aa).

GTP is bound by residues 39 to 46, 82 to 86, and 142 to 145; these read GLTGSGKT, ELGGA, and NHQD.

Belongs to the small GTPase superfamily. Arf family.

In Homo sapiens (Human), this protein is ADP-ribosylation factor-like protein 15 (ARL15).